We begin with the raw amino-acid sequence, 379 residues long: L-lactate dehydrogenase (379 aa).

Positions M1–L379 constitute an FMN hydroxy acid dehydrogenase domain. Y24 contacts substrate. 2 residues coordinate FMN: S106 and Q127. Y129 provides a ligand contact to substrate. T155 contacts FMN. R164 is a binding site for substrate. K251 is a binding site for FMN. H275 serves as the catalytic Proton acceptor. R278 contributes to the substrate binding site. D306 to R330 provides a ligand contact to FMN.

This sequence belongs to the FMN-dependent alpha-hydroxy acid dehydrogenase family. The cofactor is FMN.

The protein resides in the cell inner membrane. The catalysed reaction is (S)-lactate + A = pyruvate + AH2. Catalyzes the conversion of L-lactate to pyruvate. Is coupled to the respiratory chain. This chain is L-lactate dehydrogenase, found in Allorhizobium ampelinum (strain ATCC BAA-846 / DSM 112012 / S4) (Agrobacterium vitis (strain S4)).